The chain runs to 365 residues: Coxsackievirus and adenovirus receptor homolog (365 aa).

The first 19 residues, M1–S19, serve as a signal peptide directing secretion. Ig-like C2-type domains lie at L20–T136 and P141–D228. Residues L20 to T238 are Extracellular-facing. 3 disulfides stabilise this stretch: C41-C120, C146-C223, and C162-C212. A glycan (N-linked (GlcNAc...) asparagine) is linked at N106. Residues I239–C259 traverse the membrane as a helical segment. Residues C259 and C260 are each lipidated (S-palmitoyl cysteine). At C260–V365 the chain is on the cytoplasmic side. The span at Y269–P282 shows a compositional bias: basic and acidic residues. The interval Y269 to K315 is disordered. A compositionally biased stretch (polar residues) spans S286 to K315. Phosphoserine occurs at positions 297, 304, 306, 323, 332, and 363. Residues K360–V365 carry the PDZ-binding motif.

In terms of assembly, monomer. May form homodimer. Interacts with LNX, MAGI1, DLG4, PRKCABP, TJP1 and CTNNB1. Interacts with MPDZ; recruits MPDZ to intercellular contact sites. Interacts with JAML (homodimeric form). In terms of processing, N-glycosylated. Post-translationally, palmitoylated on Cys-259 and/or Cys-260; required for proper localization to the plasma membrane. As to expression, expressed in heart, brain, spleen, lung, liver, muscle, kidney, testis, spleen and skeletal muscle.

The protein localises to the cell membrane. It localises to the basolateral cell membrane. The protein resides in the cell junction. It is found in the tight junction. Its subcellular location is the adherens junction. In terms of biological role, component of the epithelial apical junction complex that may function as a homophilic cell adhesion molecule and is essential for tight junction integrity. Also involved in transepithelial migration of leukocytes through adhesive interactions with JAML a transmembrane protein of the plasma membrane of leukocytes. The interaction between both receptors also mediates the activation of gamma-delta T-cells, a subpopulation of T-cells residing in epithelia and involved in tissue homeostasis and repair. Upon epithelial CXADR-binding, JAML induces downstream cell signaling events in gamma-delta T-cells through PI3-kinase and MAP kinases. It results in proliferation and production of cytokines and growth factors by T-cells that in turn stimulate epithelial tissues repair. This chain is Coxsackievirus and adenovirus receptor homolog (Cxadr), found in Rattus norvegicus (Rat).